We begin with the raw amino-acid sequence, 255 residues long: Large ribosomal subunit protein uL2 (255 aa).

The disordered stretch occupies residues 201 to 229; the sequence is YAHPHGGGSHQQGGTPVKKNAPPGQKVGF.

Belongs to the universal ribosomal protein uL2 family. In terms of assembly, part of the 50S ribosomal subunit. Forms a bridge to the 30S subunit in the 70S ribosome.

Functionally, one of the primary rRNA binding proteins. Required for association of the 30S and 50S subunits to form the 70S ribosome, for tRNA binding and peptide bond formation. It has been suggested to have peptidyltransferase activity; this is somewhat controversial. Makes several contacts with the 16S rRNA in the 70S ribosome. This Caldivirga maquilingensis (strain ATCC 700844 / DSM 13496 / JCM 10307 / IC-167) protein is Large ribosomal subunit protein uL2.